We begin with the raw amino-acid sequence, 416 residues long: Multifunctional CCA protein (416 aa).

Residues Gly8 and Arg11 each coordinate ATP. CTP is bound by residues Gly8 and Arg11. Asp21 and Asp23 together coordinate Mg(2+). Positions 91, 138, and 141 each coordinate ATP. CTP-binding residues include Arg91, Arg138, and Arg141. In terms of domain architecture, HD spans 229–331 (TGLHQELVSD…YELLQRCDAF (103 aa)).

It belongs to the tRNA nucleotidyltransferase/poly(A) polymerase family. Bacterial CCA-adding enzyme type 1 subfamily. Monomer. Can also form homodimers and oligomers. Mg(2+) is required as a cofactor. The cofactor is Ni(2+).

The catalysed reaction is a tRNA precursor + 2 CTP + ATP = a tRNA with a 3' CCA end + 3 diphosphate. The enzyme catalyses a tRNA with a 3' CCA end + 2 CTP + ATP = a tRNA with a 3' CCACCA end + 3 diphosphate. Its function is as follows. Catalyzes the addition and repair of the essential 3'-terminal CCA sequence in tRNAs without using a nucleic acid template. Adds these three nucleotides in the order of C, C, and A to the tRNA nucleotide-73, using CTP and ATP as substrates and producing inorganic pyrophosphate. tRNA 3'-terminal CCA addition is required both for tRNA processing and repair. Also involved in tRNA surveillance by mediating tandem CCA addition to generate a CCACCA at the 3' terminus of unstable tRNAs. While stable tRNAs receive only 3'-terminal CCA, unstable tRNAs are marked with CCACCA and rapidly degraded. This Xylella fastidiosa (strain M23) protein is Multifunctional CCA protein.